The primary structure comprises 156 residues: MAGWTYPKLDIDENKLAKAVIKNVPASIRDLYNVCKAIRGMKLNDAKQFLNNVLEEKEALPFWKHSHGASHRSNISPKWKVKSGRYPKKAIKYVLKVLENAENNANSKGLDLENVKIVHIAAHKGIILKRYMPRAFGRSTRKYRYTSHIEVILGEV.

This sequence belongs to the universal ribosomal protein uL22 family. As to quaternary structure, part of the 50S ribosomal subunit.

In terms of biological role, this protein binds specifically to 23S rRNA. It makes multiple contacts with different domains of the 23S rRNA in the assembled 50S subunit and ribosome. The globular domain of the protein is located near the polypeptide exit tunnel on the outside of the subunit, while an extended beta-hairpin is found that lines the wall of the exit tunnel in the center of the 70S ribosome. The protein is Large ribosomal subunit protein uL22 of Sulfurisphaera tokodaii (strain DSM 16993 / JCM 10545 / NBRC 100140 / 7) (Sulfolobus tokodaii).